Here is a 347-residue protein sequence, read N- to C-terminus: S-adenosylmethionine decarboxylase proenzyme 4 (347 aa).

Catalysis depends on residues E7 and E10. E66 lines the substrate pocket. S67 serves as the catalytic Schiff-base intermediate with substrate; via pyruvic acid. Residue S67 is modified to Pyruvic acid (Ser); by autocatalysis. C81 serves as the catalytic Proton donor; for catalytic activity. Catalysis depends on proton acceptor; for processing activity residues S237 and H250. E254 contributes to the substrate binding site.

The protein belongs to the eukaryotic AdoMetDC family. The cofactor is pyruvate. Post-translationally, is synthesized initially as an inactive proenzyme. Formation of the active enzyme involves a self-maturation process in which the active site pyruvoyl group is generated from an internal serine residue via an autocatalytic post-translational modification. Two non-identical subunits are generated from the proenzyme in this reaction, and the pyruvate is formed at the N-terminus of the alpha chain, which is derived from the carboxyl end of the proenzyme. The post-translation cleavage follows an unusual pathway, termed non-hydrolytic serinolysis, in which the side chain hydroxyl group of the serine supplies its oxygen atom to form the C-terminus of the beta chain, while the remainder of the serine residue undergoes an oxidative deamination to produce ammonia and the pyruvoyl group blocking the N-terminus of the alpha chain.

The enzyme catalyses S-adenosyl-L-methionine + H(+) = S-adenosyl 3-(methylsulfanyl)propylamine + CO2. It functions in the pathway amine and polyamine biosynthesis; S-adenosylmethioninamine biosynthesis; S-adenosylmethioninamine from S-adenosyl-L-methionine: step 1/1. In terms of biological role, essential for biosynthesis of the polyamines spermidine and spermine. Essential for polyamine homeostasis, and normal plant embryogenesis, growth and development. This Arabidopsis thaliana (Mouse-ear cress) protein is S-adenosylmethionine decarboxylase proenzyme 4.